A 221-amino-acid polypeptide reads, in one-letter code: UPF0502 protein CPS_0106 (221 aa).

Belongs to the UPF0502 family.

In Colwellia psychrerythraea (strain 34H / ATCC BAA-681) (Vibrio psychroerythus), this protein is UPF0502 protein CPS_0106.